The following is a 310-amino-acid chain: Probable manganese-dependent inorganic pyrophosphatase (310 aa).

6 residues coordinate Mn(2+): histidine 9, aspartate 13, aspartate 15, aspartate 75, histidine 97, and aspartate 149.

It belongs to the PPase class C family. Requires Mn(2+) as cofactor.

Its subcellular location is the cytoplasm. The enzyme catalyses diphosphate + H2O = 2 phosphate + H(+). The sequence is that of Probable manganese-dependent inorganic pyrophosphatase from Bacillus cytotoxicus (strain DSM 22905 / CIP 110041 / 391-98 / NVH 391-98).